Consider the following 215-residue polypeptide: ATP-dependent dethiobiotin synthetase BioD (215 aa).

13–18 lines the ATP pocket; that stretch reads DIGKTV. A Mg(2+)-binding site is contributed by Thr17. The active site involves Lys38. Thr42 contributes to the substrate binding site. ATP is bound by residues Asp50, 115-118, and 175-176; these read EGAG and NH. Positions 50 and 115 each coordinate Mg(2+).

The protein belongs to the dethiobiotin synthetase family. As to quaternary structure, homodimer. Mg(2+) is required as a cofactor.

The protein resides in the cytoplasm. It carries out the reaction (7R,8S)-7,8-diammoniononanoate + CO2 + ATP = (4R,5S)-dethiobiotin + ADP + phosphate + 3 H(+). The protein operates within cofactor biosynthesis; biotin biosynthesis; biotin from 7,8-diaminononanoate: step 1/2. Catalyzes a mechanistically unusual reaction, the ATP-dependent insertion of CO2 between the N7 and N8 nitrogen atoms of 7,8-diaminopelargonic acid (DAPA, also called 7,8-diammoniononanoate) to form a ureido ring. The sequence is that of ATP-dependent dethiobiotin synthetase BioD from Neisseria meningitidis serogroup C (strain 053442).